We begin with the raw amino-acid sequence, 206 residues long: Ribosomal RNA small subunit methyltransferase G (206 aa).

S-adenosyl-L-methionine contacts are provided by residues Gly-73, Leu-78, 124 to 125 (VE), and Arg-139.

Belongs to the methyltransferase superfamily. RNA methyltransferase RsmG family.

Its subcellular location is the cytoplasm. It carries out the reaction guanosine(527) in 16S rRNA + S-adenosyl-L-methionine = N(7)-methylguanosine(527) in 16S rRNA + S-adenosyl-L-homocysteine. Its function is as follows. Specifically methylates the N7 position of guanine in position 527 of 16S rRNA. This is Ribosomal RNA small subunit methyltransferase G from Yersinia pseudotuberculosis serotype O:3 (strain YPIII).